Consider the following 314-residue polypeptide: Methionyl-tRNA formyltransferase (314 aa).

A (6S)-5,6,7,8-tetrahydrofolate-binding site is contributed by 111 to 114 (SLLP).

Belongs to the Fmt family.

It carries out the reaction L-methionyl-tRNA(fMet) + (6R)-10-formyltetrahydrofolate = N-formyl-L-methionyl-tRNA(fMet) + (6S)-5,6,7,8-tetrahydrofolate + H(+). Attaches a formyl group to the free amino group of methionyl-tRNA(fMet). The formyl group appears to play a dual role in the initiator identity of N-formylmethionyl-tRNA by promoting its recognition by IF2 and preventing the misappropriation of this tRNA by the elongation apparatus. The polypeptide is Methionyl-tRNA formyltransferase (Chlorobium chlorochromatii (strain CaD3)).